Consider the following 1023-residue polypeptide: Sodium/potassium-transporting ATPase subunit alpha-1 (1023 aa).

Residues 1–5 constitute a propeptide that is removed on maturation; the sequence is MGLGK. Residues 1–11 are compositionally biased toward basic and acidic residues; the sequence is MGLGKGKDEYK. A disordered region spans residues 1 to 33; it reads MGLGKGKDEYKLAATSEDGGKKDKKAKAKKDMD. Residues 6–87 are Cytoplasmic-facing; it reads GKDEYKLAAT…NALTPPPTTP (82 aa). Ser-16 carries the phosphoserine; by PKC modification. An interaction with phosphoinositide-3 kinase region spans residues 82–84; the sequence is PPP. Residues 88-108 form a helical membrane-spanning segment; it reads EWVKFCKQLFGGFSMLLWIGA. Residues 109 to 131 are Extracellular-facing; that stretch reads ILCFLAYGIQAASEDEPANDNLY. Residues 132-152 traverse the membrane as a helical segment; it reads LGIVLSAVVIITGCFSYYQEA. At 153-288 the chain is on the cytoplasmic side; it reads KSSKIMESFK…GGKTPIAIEI (136 aa). The interval 216–237 is disordered; sequence SSLTGESEPQTRSPDFSNENPL. A helical membrane pass occupies residues 289–308; it reads EHFIHIITGVAVFLGVSFFI. Residues 309-320 are Extracellular-facing; the sequence is LSLILGYNWLEA. The helical transmembrane segment at 321 to 338 threads the bilayer; the sequence is VIFLIGIIVANVPEGLLA. The Cytoplasmic portion of the chain corresponds to 339-772; sequence TVTVCLTLTA…EEGRLIFDNL (434 aa). Asp-376 acts as the 4-aspartylphosphate intermediate in catalysis. Lys-487 contributes to the ATP binding site. Asp-717 and Asp-721 together coordinate Mg(2+). The chain crosses the membrane as a helical span at residues 773–792; it reads KKSIAYTLTSNIPEISPFLL. Residues 793–802 lie on the Extracellular side of the membrane; it reads FIIANIPLPL. The chain crosses the membrane as a helical span at residues 803–823; that stretch reads GTVTILCIDLGTDMVPAISLA. Topologically, residues 824–843 are cytoplasmic; sequence YEKAESDIMKRQPRNPKTDK. A helical transmembrane segment spans residues 844–866; sequence LVNERLISIAYGQIGMMQATAGF. The Extracellular segment spans residues 867–918; the sequence is FTYFVILAENGFLPMDLIGVRVLWDDKYVNDLEDSYGQQWTYERRKIVEYSC. The helical transmembrane segment at 919 to 938 threads the bilayer; that stretch reads HTAFFASIVIVQWADLIICK. Topologically, residues 939–951 are cytoplasmic; sequence TRRNSIVQQGMTN. At Ser-943 the chain carries Phosphoserine; by PKA. A helical transmembrane segment spans residues 952–970; sequence RILIFGLFEETALAAFLSY. The Extracellular portion of the chain corresponds to 971-985; sequence CPGMDVALRMYPMKP. A helical membrane pass occupies residues 986–1006; the sequence is LWWFCAFPYSLLIFLYDEARR. Over 1007-1023 the chain is Cytoplasmic; sequence YILRRNPGGWVEKETYY.

It belongs to the cation transport ATPase (P-type) (TC 3.A.3) family. Type IIC subfamily. The sodium/potassium-transporting ATPase is composed of a catalytic alpha subunit, an auxiliary non-catalytic beta subunit and an additional regulatory subunit.

The protein resides in the cell membrane. It is found in the sarcolemma. The catalysed reaction is K(+)(out) + Na(+)(in) + ATP + H2O = K(+)(in) + Na(+)(out) + ADP + phosphate + H(+). In terms of biological role, this is the catalytic component of the active enzyme, which catalyzes the hydrolysis of ATP coupled with the exchange of sodium and potassium ions across the plasma membrane. This action creates the electrochemical gradient of sodium and potassium ions, providing the energy for active transport of various nutrients. In Oreochromis mossambicus (Mozambique tilapia), this protein is Sodium/potassium-transporting ATPase subunit alpha-1 (atp1a1).